The chain runs to 94 residues: Co-chaperonin GroES (94 aa).

Belongs to the GroES chaperonin family. As to quaternary structure, heptamer of 7 subunits arranged in a ring. Interacts with the chaperonin GroEL.

The protein resides in the cytoplasm. In terms of biological role, together with the chaperonin GroEL, plays an essential role in assisting protein folding. The GroEL-GroES system forms a nano-cage that allows encapsulation of the non-native substrate proteins and provides a physical environment optimized to promote and accelerate protein folding. GroES binds to the apical surface of the GroEL ring, thereby capping the opening of the GroEL channel. The protein is Co-chaperonin GroES of Bacillus licheniformis (strain ATCC 14580 / DSM 13 / JCM 2505 / CCUG 7422 / NBRC 12200 / NCIMB 9375 / NCTC 10341 / NRRL NRS-1264 / Gibson 46).